The primary structure comprises 335 residues: Adenosine deaminase (335 aa).

Zn(2+)-binding residues include His12 and His14. Substrate contacts are provided by His14 and Asp16. Zn(2+) is bound at residue His197. Glu200 functions as the Proton donor in the catalytic mechanism. Residue Asp278 coordinates Zn(2+).

The protein belongs to the metallo-dependent hydrolases superfamily. Adenosine and AMP deaminases family. Adenosine deaminase subfamily. Zn(2+) is required as a cofactor.

It carries out the reaction adenosine + H2O + H(+) = inosine + NH4(+). The catalysed reaction is 2'-deoxyadenosine + H2O + H(+) = 2'-deoxyinosine + NH4(+). Functionally, catalyzes the hydrolytic deamination of adenosine and 2-deoxyadenosine. The polypeptide is Adenosine deaminase (Clostridium botulinum (strain Loch Maree / Type A3)).